The primary structure comprises 331 residues: DNA-directed RNA polymerase subunit alpha (331 aa).

Residues 1 to 232 are alpha N-terminal domain (alpha-NTD); it reads MQGTFRDFLK…DQLSVFVDLE (232 aa). An alpha C-terminal domain (alpha-CTD) region spans residues 247–331; that stretch reads VDPILLRPID…AGLGEDRVVG (85 aa).

Belongs to the RNA polymerase alpha chain family. In terms of assembly, homodimer. The RNAP catalytic core consists of 2 alpha, 1 beta, 1 beta' and 1 omega subunit. When a sigma factor is associated with the core the holoenzyme is formed, which can initiate transcription.

The enzyme catalyses RNA(n) + a ribonucleoside 5'-triphosphate = RNA(n+1) + diphosphate. DNA-dependent RNA polymerase catalyzes the transcription of DNA into RNA using the four ribonucleoside triphosphates as substrates. The chain is DNA-directed RNA polymerase subunit alpha from Alkalilimnicola ehrlichii (strain ATCC BAA-1101 / DSM 17681 / MLHE-1).